The chain runs to 932 residues: PMS1 protein homolog 1 (932 aa).

The tract at residues 465–493 (TQSENGNKDHIDESGENEEEAGLENSSEI) is disordered. The HMG box DNA-binding region spans 571–639 (IKKPMSASAL…RYNSQMKRAI (69 aa)).

The protein belongs to the DNA mismatch repair MutL/HexB family. As to quaternary structure, component of the DNA mismatch repair (MMR) complex composed at least of MSH2, MSH3, MSH6, PMS1 and MLH1. The MutL-beta complex is a heterodimer of PMS1 and MLH1. Interacts with MCM9.

It is found in the nucleus. Its function is as follows. Probably involved in the repair of mismatches in DNA. In Homo sapiens (Human), this protein is PMS1 protein homolog 1 (PMS1).